The following is a 160-amino-acid chain: SsrA-binding protein (160 aa).

The protein belongs to the SmpB family.

It is found in the cytoplasm. In terms of biological role, required for rescue of stalled ribosomes mediated by trans-translation. Binds to transfer-messenger RNA (tmRNA), required for stable association of tmRNA with ribosomes. tmRNA and SmpB together mimic tRNA shape, replacing the anticodon stem-loop with SmpB. tmRNA is encoded by the ssrA gene; the 2 termini fold to resemble tRNA(Ala) and it encodes a 'tag peptide', a short internal open reading frame. During trans-translation Ala-aminoacylated tmRNA acts like a tRNA, entering the A-site of stalled ribosomes, displacing the stalled mRNA. The ribosome then switches to translate the ORF on the tmRNA; the nascent peptide is terminated with the 'tag peptide' encoded by the tmRNA and targeted for degradation. The ribosome is freed to recommence translation, which seems to be the essential function of trans-translation. This chain is SsrA-binding protein, found in Zymomonas mobilis subsp. mobilis (strain ATCC 31821 / ZM4 / CP4).